We begin with the raw amino-acid sequence, 255 residues long: Major prion protein (255 aa).

Positions 1–24 (MVKSHIGSWILVLFVAMWSDVGLC) are cleaved as a signal peptide. Residues 25 to 41 (KKRPKPGGGWNTGGSRY) are interaction with ADGRG6. The tract at residues 25–232 (KKRPKPGGGW…ESEAYYQRGA (208 aa)) is interaction with GRB2, ERI3 and SYN1. The tract at residues 28–110 (PKPGGGWNTG…QWNKPSKPKT (83 aa)) is disordered. A run of 5 repeats spans residues 54–62 (PQGGGGWGQ), 63–70 (PHGGGWGQ), 71–78 (PHGGGWGQ), 79–86 (PHGGGWGQ), and 87–94 (PHGGGGWG). The segment at 54–94 (PQGGGGWGQPHGGGWGQPHGGGWGQPHGGGWGQPHGGGGWG) is 5 X 8 AA tandem repeats of P-H-G-G-G-W-G-Q. A compositionally biased stretch (gly residues) spans 55-97 (QGGGGWGQPHGGGWGQPHGGGWGQPHGGGWGQPHGGGGWGQGG). Residues His64, Gly65, Gly66, His72, Gly73, Gly74, His80, Gly81, Gly82, His88, Gly90, and Gly91 each contribute to the Cu(2+) site. 3 N-linked (GlcNAc...) asparagine glycosylation sites follow: Asn174, Asn184, and Asn199. Cys182 and Cys216 are joined by a disulfide. Ala232 carries the GPI-anchor amidated alanine lipid modification. Residues 233–255 (SVILFSSPPVILLVSFLIFLIVG) constitute a propeptide, removed in mature form.

This sequence belongs to the prion family. As to quaternary structure, monomer and homodimer. Has a tendency to aggregate into amyloid fibrils containing a cross-beta spine, formed by a steric zipper of superposed beta-strands. Soluble oligomers may represent an intermediate stage on the path to fibril formation. Copper binding may promote oligomerization. Interacts with GRB2, APP, ERI3/PRNPIP and SYN1. Mislocalized cytosolically exposed PrP interacts with MGRN1; this interaction alters MGRN1 subcellular location and causes lysosomal enlargement. Interacts with APP. Interacts with KIAA1191. Interacts with ADGRG6.

The protein resides in the cell membrane. The protein localises to the golgi apparatus. In terms of biological role, its primary physiological function is unclear. May play a role in neuronal development and synaptic plasticity. May be required for neuronal myelin sheath maintenance. May promote myelin homeostasis through acting as an agonist for ADGRG6 receptor. May play a role in iron uptake and iron homeostasis. Soluble oligomers are toxic to cultured neuroblastoma cells and induce apoptosis (in vitro). Association with GPC1 (via its heparan sulfate chains) targets PRNP to lipid rafts. Also provides Cu(2+) or Zn(2+) for the ascorbate-mediated GPC1 deaminase degradation of its heparan sulfate side chains. The sequence is that of Major prion protein (PRNP) from Canis lupus familiaris (Dog).